The sequence spans 285 residues: RNA polymerase sigma factor RpoH (285 aa).

The sigma-70 factor domain-2 stretch occupies residues 53 to 122; sequence LILSHLRFVI…IHEYVLRNWR (70 aa). The Interaction with polymerase core subunit RpoC motif lies at 77–80; sequence DLIQ. The sigma-70 factor domain-4 stretch occupies residues 229–281; the sequence is ALLRLDERSRNIIRARWLDKKEKNTLQKIANNYGISAERVRQLEKNAMKKLKI. The H-T-H motif DNA-binding region spans 254–273; that stretch reads LQKIANNYGISAERVRQLEK.

This sequence belongs to the sigma-70 factor family. RpoH subfamily. As to quaternary structure, interacts with the RNA polymerase core enzyme.

Its subcellular location is the cytoplasm. In terms of biological role, sigma factors are initiation factors that promote the attachment of RNA polymerase to specific initiation sites and are then released. This sigma factor is involved in regulation of expression of heat shock genes. The protein is RNA polymerase sigma factor RpoH of Buchnera aphidicola subsp. Schizaphis graminum (strain Sg).